The sequence spans 370 residues: Selenide, water dikinase 2 (370 aa).

Residue Sec-24 is part of the active site. Residue Sec-24 is a non-standard amino acid, selenocysteine. ATP contacts are provided by residues Lys-27, 55-57, Asp-76, and Asp-99; that span reads GMD. Asp-57 provides a ligand contact to Mg(2+). Asp-99 and Asp-258 together coordinate Mg(2+).

Belongs to the selenophosphate synthase 1 family. Class I subfamily. As to quaternary structure, homodimer. It depends on Mg(2+) as a cofactor. As to expression, first expressed in the midgut anlagen with subsequent expression in a variety of tissues including the gut and nervous system.

The catalysed reaction is hydrogenselenide + ATP + H2O = selenophosphate + AMP + phosphate + 2 H(+). Synthesizes selenophosphate from selenide and ATP. The sequence is that of Selenide, water dikinase 2 (Sps2) from Drosophila melanogaster (Fruit fly).